Reading from the N-terminus, the 482-residue chain is Arginine/ornithine antiporter (482 aa).

Residues 1–10 (MSQESSQKLR) are Cytoplasmic-facing. A helical transmembrane segment spans residues 11-31 (LGALTALVVGSMIGGGIFSLP). Residues 32–40 (QNMAASADV) lie on the Periplasmic side of the membrane. Residues 41-61 (GAVLIGWAITAVGMLTLAFVF) form a helical membrane-spanning segment. The Cytoplasmic segment spans residues 62–100 (QTLANRKPELDGGVYAYAKAGFGDYMGFSSAWGYWISAW). The helical transmembrane segment at 101–121 (LGNVGYFVLLFSTLGYFFPIF) threads the bilayer. The Periplasmic segment spans residues 122–124 (GKG). The chain crosses the membrane as a helical span at residues 125-145 (DTVAAIVCASVLLWALHFLVL). Topologically, residues 146–156 (RGIKEAAFINT) are cytoplasmic. Residues 157 to 177 (VTTVAKVVPLFLFILICLFAF) form a helical membrane-spanning segment. Over 178 to 202 (KLDIFTADIWGKSNPDLGSVMNQVR) the chain is Periplasmic. A helical membrane pass occupies residues 203 to 223 (NMMLVTVWVFIGIEGASIFSS). Residues 224-235 (RAEKRSDVGKAT) are Cytoplasmic-facing. A helical transmembrane segment spans residues 236–256 (VIGFITVLLLLVLVNVLSMGV). The Periplasmic segment spans residues 257–283 (MTQPELAKLQNPSMALVLEHVVGHWGA). Residues 284–304 (VLISVGLLISLLGALLSWVLL) form a helical membrane-spanning segment. The Cytoplasmic portion of the chain corresponds to 305–333 (CAEIMFAAAKDHTMPEFLRRENANQVPAN). The helical transmembrane segment at 334 to 354 (ALWLTNICVQVFLVVVFFTSG) threads the bilayer. The Periplasmic portion of the chain corresponds to 355–365 (DPDGMDPYTKM). Residues 366 to 386 (LLLATSMILIPYFWSAAYGLL) form a helical membrane-spanning segment. Over 387–403 (LTLKGETYENDARERSK) the chain is Cytoplasmic. A helical membrane pass occupies residues 404-424 (DLVIAGIAVAYAVWLLYAGGL). A topological domain (periplasmic) is located at residue lysine 425. A helical membrane pass occupies residues 426–446 (YLLLSALLYAPGAILFAKAKH). Residues 447–458 (EVGQPIFTGIEK) lie on the Cytoplasmic side of the membrane. The helical transmembrane segment at 459–479 (LIFAAVVIGALVAAYGLYDGF) threads the bilayer. At 480 to 482 (LTL) the chain is on the periplasmic side.

The protein belongs to the amino acid-polyamine-organocation (APC) superfamily. Basic amino acid/polyamine antiporter (APA) (TC 2.A.3.2) family.

Its subcellular location is the cell inner membrane. It catalyses the reaction L-ornithine(in) + L-arginine(out) = L-ornithine(out) + L-arginine(in). Its function is as follows. Catalyzes electroneutral exchange between arginine and ornithine to allow high-efficiency energy conversion in the arginine deiminase pathway. Also mediates the proton motive force-driven uptake of arginine and ornithine, but the exchange is several orders of magnitude faster than the proton motive force-driven transport. The polypeptide is Arginine/ornithine antiporter (Pseudomonas aeruginosa (strain ATCC 15692 / DSM 22644 / CIP 104116 / JCM 14847 / LMG 12228 / 1C / PRS 101 / PAO1)).